The following is a 256-amino-acid chain: Protein Ta0487 (256 aa).

This sequence belongs to the CinA family.

The chain is Protein Ta0487 from Thermoplasma acidophilum (strain ATCC 25905 / DSM 1728 / JCM 9062 / NBRC 15155 / AMRC-C165).